The primary structure comprises 951 residues: Pheromone-regulated membrane protein 10 (951 aa).

3 stretches are compositionally biased toward polar residues: residues 1 to 10 (MSSSYGNNGD), 68 to 84 (GGST…NVGS), and 92 to 104 (RTAS…NRRQ). Disordered stretches follow at residues 1–293 (MSSS…EDPI), 313–366 (AGKS…TMVS), and 433–487 (NDSS…LPNF). Over residues 126-135 (DDDDEEEEEH) the composition is skewed to acidic residues. Over residues 219 to 234 (PHQETNDGRNSAESHS) the composition is skewed to basic and acidic residues. Composition is skewed to polar residues over residues 318–332 (PGTQ…SSEH), 354–366 (PFNQ…TMVS), and 468–484 (SQTN…SMNL). 10 helical membrane-spanning segments follow: residues 635–655 (WVSV…AFGG), 657–677 (WINM…QFIV), 687–707 (VFEV…GSIP), 711–731 (ICFG…YIIL), 753–773 (IIYS…FGWI), 786–806 (NISP…LGLI), 811–831 (WTQL…TYFS), 841–861 (FTSA…SRIW), 863–883 (GFAV…GVAS), and 918–938 (VTMI…TLFI).

It belongs to the ThrE exporter (TC 2.A.79) family.

The protein resides in the membrane. This is Pheromone-regulated membrane protein 10 from Kluyveromyces lactis (strain ATCC 8585 / CBS 2359 / DSM 70799 / NBRC 1267 / NRRL Y-1140 / WM37) (Yeast).